We begin with the raw amino-acid sequence, 102 residues long: Large ribosomal subunit protein uL24 (102 aa).

It belongs to the universal ribosomal protein uL24 family. In terms of assembly, part of the 50S ribosomal subunit.

One of two assembly initiator proteins, it binds directly to the 5'-end of the 23S rRNA, where it nucleates assembly of the 50S subunit. In terms of biological role, one of the proteins that surrounds the polypeptide exit tunnel on the outside of the subunit. This chain is Large ribosomal subunit protein uL24, found in Rhizobium leguminosarum bv. trifolii (strain WSM2304).